A 336-amino-acid polypeptide reads, in one-letter code: tRNA-splicing endonuclease (336 aa).

Residues tyrosine 271, histidine 282, and lysine 313 contribute to the active site.

This sequence belongs to the tRNA-intron endonuclease family. Archaeal long subfamily. In terms of assembly, homodimer.

The enzyme catalyses pretRNA = a 3'-half-tRNA molecule with a 5'-OH end + a 5'-half-tRNA molecule with a 2',3'-cyclic phosphate end + an intron with a 2',3'-cyclic phosphate and a 5'-hydroxyl terminus.. Endonuclease that removes tRNA introns. Cleaves pre-tRNA at the 5'- and 3'-splice sites to release the intron. The products are an intron and two tRNA half-molecules bearing 2',3' cyclic phosphate and 5'-OH termini. Recognizes a pseudosymmetric substrate in which 2 bulged loops of 3 bases are separated by a stem of 4 bp. In Natronomonas pharaonis (strain ATCC 35678 / DSM 2160 / CIP 103997 / JCM 8858 / NBRC 14720 / NCIMB 2260 / Gabara) (Halobacterium pharaonis), this protein is tRNA-splicing endonuclease.